Here is a 313-residue protein sequence, read N- to C-terminus: Protein EMSY-LIKE 2 (313 aa).

Residues 1–88 (MEAQIHILEQ…HQSLDVHPSP (88 aa)) enclose the ENT domain. Residues 35–58 (MTNLRKELRISDDENRQLLNNVHN) adopt a coiled-coil conformation. 2 disordered regions span residues 84 to 106 (VHPS…YPSI) and 195 to 229 (LNVG…REHL). Over residues 206–219 (GNRRTLSHGGRGRG) the composition is skewed to basic residues. Positions 267–293 (HELDKAKKLLKEHEQALIAAIARLTDA) form a coiled coil. At Ser294 the chain carries Phosphoserine. The disordered stretch occupies residues 294 to 313 (SDYESDGEEPYSHELPMLLG).

Interacts with EDM2 in nucleus.

The protein resides in the nucleus. Its function is as follows. Probably involved in the regulation of chromatin states. Contributes to RPP7-mediated and basal immunity, especially against Hyaloperonospora arabidopsidis isolate Hiks1. Regulates negatively EDM2-dependent floral transition. The sequence is that of Protein EMSY-LIKE 2 from Arabidopsis thaliana (Mouse-ear cress).